We begin with the raw amino-acid sequence, 423 residues long: Cyclin-B2-1 (423 aa).

A disordered region spans residues 1 to 61; it reads MDRASENRRL…EKSGKEEQKP (61 aa). The segment covering 49-60 has biased composition (basic and acidic residues); that stretch reads PMLEKSGKEEQK.

This sequence belongs to the cyclin family. Cyclin AB subfamily. As to quaternary structure, interacts with CDKB2-1. Expressed in the intercalary meristem and the elongation zone of internodes. Expressed in adventitious roots at all nodes under submergence conditions.

In terms of biological role, involved in the control of the cell cycle at the G2/M (mitosis) transition. May activate CDKB2-1 kinase. The protein is Cyclin-B2-1 (CYCB2-1) of Oryza sativa subsp. indica (Rice).